Here is an 800-residue protein sequence, read N- to C-terminus: Putative antiporter subunit mnhA2 (800 aa).

A run of 20 helical transmembrane segments spans residues 1 to 21 (MSLV…LLTS), 33 to 53 (IALT…PSVI), 78 to 98 (GLSL…FFYA), 118 to 138 (LFMF…MYVF), 167 to 187 (FMIT…LYIM), 207 to 227 (ALFI…SAQF), 241 to 261 (TPVS…FLLL), 273 to 293 (YIYI…ITAL), 300 to 320 (GILA…VGIG), 331 to 351 (IASI…NHAI), 387 to 407 (LVMM…GFLS), 424 to 444 (FSLI…IFTF), 472 to 492 (PWLF…IFFV), 527 to 547 (GFNI…VLAI), 595 to 615 (IIMT…RIGL), 627 to 647 (GPLE…LIFI), 651 to 671 (LTMV…FIAM), 676 to 696 (LALT…VSFS), 712 to 732 (IIKI…IFIA), and 768 to 788 (LDTL…YTLL).

Belongs to the CPA3 antiporters (TC 2.A.63) subunit A family. In terms of assembly, may form a heterooligomeric complex that consists of seven subunits: mnhA2, mnhB2, mnhC2, mnhD2, mnhE2, mnhF2 and mnhG2.

Its subcellular location is the cell membrane. The polypeptide is Putative antiporter subunit mnhA2 (mnhA2) (Staphylococcus aureus (strain MRSA252)).